We begin with the raw amino-acid sequence, 197 residues long: Glycerol-3-phosphate acyltransferase (197 aa).

5 consecutive transmembrane segments (helical) span residues 6 to 26 (LFIV…AIIV), 58 to 78 (AITL…AHYL), 82 to 102 (MLNV…PIFF), 116 to 136 (ALLA…VFVA), and 157 to 177 (FYLI…CLWI).

It belongs to the PlsY family. As to quaternary structure, probably interacts with PlsX.

Its subcellular location is the cell inner membrane. It catalyses the reaction an acyl phosphate + sn-glycerol 3-phosphate = a 1-acyl-sn-glycero-3-phosphate + phosphate. Its pathway is lipid metabolism; phospholipid metabolism. Catalyzes the transfer of an acyl group from acyl-phosphate (acyl-PO(4)) to glycerol-3-phosphate (G3P) to form lysophosphatidic acid (LPA). This enzyme utilizes acyl-phosphate as fatty acyl donor, but not acyl-CoA or acyl-ACP. The polypeptide is Glycerol-3-phosphate acyltransferase (Ruthia magnifica subsp. Calyptogena magnifica).